The primary structure comprises 248 residues: Probable transcriptional regulatory protein Oter_1471 (248 aa).

Belongs to the TACO1 family.

The protein localises to the cytoplasm. The chain is Probable transcriptional regulatory protein Oter_1471 from Opitutus terrae (strain DSM 11246 / JCM 15787 / PB90-1).